The following is a 277-amino-acid chain: Exosome complex component Rrp42 (277 aa).

Belongs to the RNase PH family. Rrp42 subfamily. In terms of assembly, component of the archaeal exosome complex. Forms a hexameric ring-like arrangement composed of 3 Rrp41-Rrp42 heterodimers. The hexameric ring associates with a trimer of Rrp4 and/or Csl4 subunits.

It is found in the cytoplasm. In terms of biological role, non-catalytic component of the exosome, which is a complex involved in RNA degradation. Contributes to the structuring of the Rrp41 active site. The chain is Exosome complex component Rrp42 from Pyrococcus furiosus (strain ATCC 43587 / DSM 3638 / JCM 8422 / Vc1).